The primary structure comprises 73 residues: Disintegrin cerastin (73 aa).

The Disintegrin domain occupies 1–73 (EAGEECDCGT…ADCPRNGLYG (73 aa)). Disulfide bonds link Cys6-Cys21, Cys8-Cys16, Cys15-Cys38, Cys29-Cys35, Cys34-Cys59, and Cys47-Cys66. A Cell attachment site motif is present at residues 51–53 (RGD).

The protein belongs to the venom metalloproteinase (M12B) family. P-II subfamily. P-IIa sub-subfamily. Monomer (disintegrin). Expressed by the venom gland.

Its subcellular location is the secreted. In terms of biological role, inhibits fibrinogen interaction with platelets. Acts by binding to alpha-IIb/beta-3 (ITGA2B/ITGB3) on the platelet surface and inhibits aggregation induced by ADP, thrombin, platelet-activating factor and collagen. The protein is Disintegrin cerastin of Crotalus cerastes cerastes (Mojave desert sidewinder).